The sequence spans 391 residues: D-alanine--D-alanine ligase (391 aa).

The interval 1–24 (MSSENLPQSPERAESPQAPRRKPR) is disordered. Residues 171 to 381 (KRVFLSFGLP…YPELVDRLIQ (211 aa)) form the ATP-grasp domain. 207-262 (AGEHGWPLFIKPARGGSSMGITKVDSVEGLDAAIEEARRHDPKFLVESLLRGREIE) contributes to the ATP binding site. The Mg(2+) site is built by aspartate 335, glutamate 348, and asparagine 350.

The protein belongs to the D-alanine--D-alanine ligase family. Requires Mg(2+) as cofactor. It depends on Mn(2+) as a cofactor.

It is found in the cytoplasm. It catalyses the reaction 2 D-alanine + ATP = D-alanyl-D-alanine + ADP + phosphate + H(+). It functions in the pathway cell wall biogenesis; peptidoglycan biosynthesis. Functionally, cell wall formation. This chain is D-alanine--D-alanine ligase, found in Streptomyces griseus subsp. griseus (strain JCM 4626 / CBS 651.72 / NBRC 13350 / KCC S-0626 / ISP 5235).